A 463-amino-acid polypeptide reads, in one-letter code: Quinolone resistance protein NorB (463 aa).

The next 14 membrane-spanning stretches (helical) occupy residues 17–37, 53–73, 86–106, 107–127, 142–162, 165–185, 201–221, 230–250, 273–293, 299–319, 334–354, 357–377, 403–423, and 435–455; these read IGIVLSVITFWLFAQSLVNVV, IAVSITALFSGMFVVGAGGLA, IILNILGSLLIIISNIPLLLI, IGRLIQGLSAACIMPATLSII, YWSIGSWGGSGVCSFFGGAVA, LGWRWIFILSIIISLIALFLI, FDIKGLVLLVIMLLSLNILIT, SLLFITLLAIAIGSFSLFIVL, TASNFLLNGVAGTLIVANTFV, YSSLQAGSLSITYLVMVLIMI, PMLIGTGVLIVGECLISLTFL, IFYVICCIIGYLFFGLGLGIY, MASALGGAFGVALSGAVYAIV, and IALWLNAGMGILSFVIILLLV.

The protein belongs to the major facilitator superfamily. TCR/Tet family.

The protein localises to the cell membrane. Its function is as follows. Multidrug efflux pump that acts independently of NorA and is one of the factors that confers resistance against diverse quinolones and chemical compounds. The polypeptide is Quinolone resistance protein NorB (norB) (Staphylococcus aureus (strain USA300)).